Here is a 217-residue protein sequence, read N- to C-terminus: Protein DJ-1alpha (217 aa).

The Nucleophile role is filled by C133. C133 is modified (cysteine sulfinic acid (-SO2H); alternate).

In terms of tissue distribution, expressed in testis (at protein level).

The protein localises to the cytoplasm. It is found in the nucleus. Its subcellular location is the mitochondrion. Functionally, plays an important role in cell protection against oxidative stress and cell death acting as oxidative stress sensor. Does not play a role in methylglyoxal detoxification. This chain is Protein DJ-1alpha, found in Drosophila melanogaster (Fruit fly).